The primary structure comprises 634 residues: 1-deoxy-D-xylulose-5-phosphate synthase (634 aa).

Thiamine diphosphate-binding positions include His-74 and 115 to 117 (AHS). Asp-146 is a Mg(2+) binding site. Residues 147 to 148 (GA), Asn-176, Tyr-283, and Glu-365 each bind thiamine diphosphate. Residue Asn-176 coordinates Mg(2+).

It belongs to the transketolase family. DXPS subfamily. In terms of assembly, homodimer. Requires Mg(2+) as cofactor. Thiamine diphosphate serves as cofactor.

The enzyme catalyses D-glyceraldehyde 3-phosphate + pyruvate + H(+) = 1-deoxy-D-xylulose 5-phosphate + CO2. It functions in the pathway metabolic intermediate biosynthesis; 1-deoxy-D-xylulose 5-phosphate biosynthesis; 1-deoxy-D-xylulose 5-phosphate from D-glyceraldehyde 3-phosphate and pyruvate: step 1/1. Catalyzes the acyloin condensation reaction between C atoms 2 and 3 of pyruvate and glyceraldehyde 3-phosphate to yield 1-deoxy-D-xylulose-5-phosphate (DXP). This Burkholderia lata (strain ATCC 17760 / DSM 23089 / LMG 22485 / NCIMB 9086 / R18194 / 383) protein is 1-deoxy-D-xylulose-5-phosphate synthase.